Reading from the N-terminus, the 570-residue chain is L-ascorbate oxidase (570 aa).

The N-terminal stretch at 1-18 is a signal peptide; that stretch reads MGMWWIVAVAILAHTASA. 2 consecutive Plastocyanin-like domains span residues 33–140 and 154–317; these read WPDC…IIDV and FNLL…LNYV. Disulfide bonds link C36-C219, C98-C557, and C197-C211. H77 and H79 together coordinate Cu cation. N109 carries an N-linked (GlcNAc...) asparagine glycan. The Cu cation site is built by H121 and H123. A glycan (N-linked (GlcNAc...) asparagine) is linked at N196. N229, N343, N384, N407, N434, N442, and N458 each carry an N-linked (GlcNAc...) asparagine glycan. The 118-residue stretch at 426 to 543 folds into the Plastocyanin-like 3 domain; that stretch reads RNRNAKQGNV…MGMGVVFAEG (118 aa). Residues H463, H466, H468, H525, C526, H527, H531, and M536 each contribute to the Cu cation site.

It belongs to the multicopper oxidase family. Dimer. Cu cation serves as cofactor.

Its subcellular location is the secreted. The enzyme catalyses 4 L-ascorbate + O2 = 4 monodehydro-L-ascorbate radical + 2 H2O. It functions in the pathway cofactor degradation; L-ascorbate degradation. Ascorbate oxidase involved in a redox system involving ascorbic acid (AsA). The oxidation of AsA represses responses to high salinity and oxidative stress conditions such as vegetative growth and seed production reductions. Negative regulator of defense responses toward incompatible Turnip mosaic virus (TuMV strain UK1) by preventing jasmonic acid (JA)- dependent accumulation of ascorbic acid (AsA, AS) and dehydroascobic acid (DHA). The chain is L-ascorbate oxidase from Brassica rapa subsp. pekinensis (Chinese cabbage).